The chain runs to 227 residues: UPF0441 protein YPO0661/y3517/YP_2976 (227 aa).

The interval 198–227 (GGFGESVAKQSSMQRSAATSSKTTTRSMGG) is disordered. Residues 212-227 (RSAATSSKTTTRSMGG) show a composition bias toward low complexity.

This sequence belongs to the UPF0441 family.

This Yersinia pestis protein is UPF0441 protein YPO0661/y3517/YP_2976.